The sequence spans 260 residues: MPSIQLPVLLLCLTLSGVCLNGRQFPPELSENMGRSSLDDILQRSGSHMLQSVLKKVEKKEEMNKELNMPLPQWLSKRQHPGKRYISDPEKRQHPGKRDVEEKASFGDIQKRQHLGKTEVEGYLVNYLELKKRQHPGRRSLWDQSTDISSSQLTYLNELSKRQHPGRRYLMYKHQHPSKRGWNDELDLSDQNWEKHQQFGNRDRDSDSPDYTGPCDLQQSAICNKDSLLLDLAEKFSKEGVEEKHQHPGRRSAWENETEE.

An N-terminal signal peptide occupies residues 1 to 24 (MPSIQLPVLLLCLTLSGVCLNGRQ). Residues 72 to 112 (PQWLSKRQHPGKRYISDPEKRQHPGKRDVEEKASFGDIQKR) form a disordered region. Gln79 carries the pyrrolidone carboxylic acid modification. Pro81 bears the Proline amide mark. Basic and acidic residues predominate over residues 85-112 (YISDPEKRQHPGKRDVEEKASFGDIQKR). Residue Gln93 is modified to Pyrrolidone carboxylic acid. Pro95 is modified (proline amide). At Gln113 the chain carries Pyrrolidone carboxylic acid. Leu115 carries the leucine amide modification. Pyrrolidone carboxylic acid is present on Gln134. Proline amide is present on Pro136. Gln163 is subject to Pyrrolidone carboxylic acid. At Pro165 the chain carries Proline amide. Positions 195-207 (KHQQFGNRDRDSD) are enriched in basic and acidic residues. 2 disordered regions span residues 195 to 217 (KHQQFGNRDRDSDSPDYTGPCDL) and 238 to 260 (KEGVEEKHQHPGRRSAWENETEE). Gln246 is modified (pyrrolidone carboxylic acid). Pro248 carries the proline amide modification.

This sequence belongs to the TRH family.

It is found in the secreted. Its function is as follows. Functions as a regulator of the biosynthesis of TSH in the anterior pituitary gland and as a neurotransmitter/ neuromodulator in the central and peripheral nervous systems. This Gallus gallus (Chicken) protein is Pro-thyrotropin-releasing hormone (TRH).